The following is a 161-amino-acid chain: Regulator of ribonuclease activity A (161 aa).

It belongs to the RraA family. As to quaternary structure, homotrimer. Binds to both RNA-binding sites in the C-terminal region of Rne and to RhlB.

Its subcellular location is the cytoplasm. Its function is as follows. Globally modulates RNA abundance by binding to RNase E (Rne) and regulating its endonucleolytic activity. Can modulate Rne action in a substrate-dependent manner by altering the composition of the degradosome. Modulates RNA-binding and helicase activities of the degradosome. The protein is Regulator of ribonuclease activity A of Pectobacterium atrosepticum (strain SCRI 1043 / ATCC BAA-672) (Erwinia carotovora subsp. atroseptica).